A 23-amino-acid polypeptide reads, in one-letter code: Cytochrome c oxidase subunit 7A-liver, mitochondrial (23 aa).

It belongs to the cytochrome c oxidase VIIa family. Component of the cytochrome c oxidase (complex IV, CIV), a multisubunit enzyme composed of 14 subunits. The complex is composed of a catalytic core of 3 subunits MT-CO1, MT-CO2 and MT-CO3, encoded in the mitochondrial DNA, and 11 supernumerary subunits COX4I, COX5A, COX5B, COX6A, COX6B, COX6C, COX7A, COX7B, COX7C, COX8 and NDUFA4, which are encoded in the nuclear genome. The complex exists as a monomer or a dimer and forms supercomplexes (SCs) in the inner mitochondrial membrane with NADH-ubiquinone oxidoreductase (complex I, CI) and ubiquinol-cytochrome c oxidoreductase (cytochrome b-c1 complex, complex III, CIII), resulting in different assemblies (supercomplex SCI(1)III(2)IV(1) and megacomplex MCI(2)III(2)IV(2)).

The protein resides in the mitochondrion inner membrane. It participates in energy metabolism; oxidative phosphorylation. Component of the cytochrome c oxidase, the last enzyme in the mitochondrial electron transport chain which drives oxidative phosphorylation. The respiratory chain contains 3 multisubunit complexes succinate dehydrogenase (complex II, CII), ubiquinol-cytochrome c oxidoreductase (cytochrome b-c1 complex, complex III, CIII) and cytochrome c oxidase (complex IV, CIV), that cooperate to transfer electrons derived from NADH and succinate to molecular oxygen, creating an electrochemical gradient over the inner membrane that drives transmembrane transport and the ATP synthase. Cytochrome c oxidase is the component of the respiratory chain that catalyzes the reduction of oxygen to water. Electrons originating from reduced cytochrome c in the intermembrane space (IMS) are transferred via the dinuclear copper A center (CU(A)) of subunit 2 and heme A of subunit 1 to the active site in subunit 1, a binuclear center (BNC) formed by heme A3 and copper B (CU(B)). The BNC reduces molecular oxygen to 2 water molecules using 4 electrons from cytochrome c in the IMS and 4 protons from the mitochondrial matrix. The polypeptide is Cytochrome c oxidase subunit 7A-liver, mitochondrial (Oncorhynchus mykiss (Rainbow trout)).